The chain runs to 271 residues: Phosphonoacetaldehyde hydrolase (271 aa).

Residue D12 is the Nucleophile of the active site. Residues D12 and A14 each contribute to the Mg(2+) site. The active-site Schiff-base intermediate with substrate is the K54. D188 contributes to the Mg(2+) binding site.

Belongs to the HAD-like hydrolase superfamily. PhnX family. As to quaternary structure, homodimer. The cofactor is Mg(2+).

It carries out the reaction phosphonoacetaldehyde + H2O = acetaldehyde + phosphate + H(+). Its function is as follows. Involved in phosphonate degradation. In Vibrio cholerae serotype O1 (strain ATCC 39541 / Classical Ogawa 395 / O395), this protein is Phosphonoacetaldehyde hydrolase.